We begin with the raw amino-acid sequence, 416 residues long: Transmembrane protease serine 11B-like protein (416 aa).

Over 1-15 the chain is Cytoplasmic; it reads MYRPVIASRKSIPPW. The helical; Signal-anchor for type II membrane protein transmembrane segment at 16–36 threads the bilayer; the sequence is LIILCVLGVLAALGIIIGLLV. The Extracellular portion of the chain corresponds to 37 to 416; sequence HFLAVENKIY…RNWIASKTGI (380 aa). In terms of domain architecture, SEA spans 44 to 161; that stretch reads KIYYYQGGFK…GSLKLTEISK (118 aa). Asparagine 107 is a glycosylation site (N-linked (GlcNAc...) asparagine). One can recognise a Peptidase S1 domain in the interval 185–415; it reads ITGGSTAHKG…YRNWIASKTG (231 aa). A disulfide bridge links cysteine 210 with cysteine 226. Histidine 225 functions as the Charge relay system in the catalytic mechanism. N-linked (GlcNAc...) asparagine glycosylation is present at asparagine 235. Aspartate 270 (charge relay system) is an active-site residue. Disulfide bonds link cysteine 335-cysteine 351 and cysteine 362-cysteine 391. Residue serine 366 is the Charge relay system of the active site.

Belongs to the peptidase S1 family. Expressed in esophagus, cervix, tongue, and testes.

The protein resides in the cell membrane. Its activity is regulated as follows. Inhibited by aprotinin, leupeptin, benzamidine, SERPINA1, SPINT1 and SPINT2. In terms of biological role, serine protease. This chain is Transmembrane protease serine 11B-like protein (Tmprss11b), found in Mus musculus (Mouse).